A 326-amino-acid polypeptide reads, in one-letter code: MQGSARNFLKPKLVESSQTGVNEFKVILEPLERGFGHTLGNALRRTLLSSMTGSAVTEVAIDGVMHEFSTIEGVQEDVLDILLNLKEVSVMLNTAETAQVVIEKKGPCEITVADIEANGIDITAFNPDKVIATINDESHMRMTLKISTGIGYDTATSRTDEASSIGGMQLDASFSPIRRVSFTVDAARVKQKVNLDKLNITIETNGSVNAEVAIKRAAIILQEQLSSFVELELVEEEEALPTSEDFDPQLLAAVDELELTVRSANCLKAEQIYYIGDLIQKSEQDLLRTPNLGRKSLNEIKEVLTEKGLNLATSIENWPPVDLMSE.

Positions Met1–Glu232 are alpha N-terminal domain (alpha-NTD). The tract at residues Phe246 to Glu326 is alpha C-terminal domain (alpha-CTD).

This sequence belongs to the RNA polymerase alpha chain family. In terms of assembly, homodimer. The RNAP catalytic core consists of 2 alpha, 1 beta, 1 beta' and 1 omega subunit. When a sigma factor is associated with the core the holoenzyme is formed, which can initiate transcription.

It carries out the reaction RNA(n) + a ribonucleoside 5'-triphosphate = RNA(n+1) + diphosphate. In terms of biological role, DNA-dependent RNA polymerase catalyzes the transcription of DNA into RNA using the four ribonucleoside triphosphates as substrates. This chain is DNA-directed RNA polymerase subunit alpha, found in Ruthia magnifica subsp. Calyptogena magnifica.